The sequence spans 95 residues: Small ribosomal subunit protein bS6 (95 aa).

It belongs to the bacterial ribosomal protein bS6 family.

Binds together with bS18 to 16S ribosomal RNA. This Clostridium kluyveri (strain NBRC 12016) protein is Small ribosomal subunit protein bS6.